Reading from the N-terminus, the 60-residue chain is Metallothionein-like protein EMB30 (60 aa).

The protein belongs to the metallothionein superfamily. Type 15 family.

In terms of biological role, metallothioneins have a high content of cysteine residues that bind various heavy metals. This is Metallothionein-like protein EMB30 (EMB30) from Picea glauca (White spruce).